We begin with the raw amino-acid sequence, 207 residues long: Imidazole glycerol phosphate synthase subunit HisH (207 aa).

The Glutamine amidotransferase type-1 domain maps to 1–206 (MMIVIGYDAG…KEYVYENTAR (206 aa)). Cys-79 serves as the catalytic Nucleophile. Catalysis depends on residues His-181 and Glu-183.

Heterodimer of HisH and HisF.

It is found in the cytoplasm. The catalysed reaction is 5-[(5-phospho-1-deoxy-D-ribulos-1-ylimino)methylamino]-1-(5-phospho-beta-D-ribosyl)imidazole-4-carboxamide + L-glutamine = D-erythro-1-(imidazol-4-yl)glycerol 3-phosphate + 5-amino-1-(5-phospho-beta-D-ribosyl)imidazole-4-carboxamide + L-glutamate + H(+). It carries out the reaction L-glutamine + H2O = L-glutamate + NH4(+). Its pathway is amino-acid biosynthesis; L-histidine biosynthesis; L-histidine from 5-phospho-alpha-D-ribose 1-diphosphate: step 5/9. In terms of biological role, IGPS catalyzes the conversion of PRFAR and glutamine to IGP, AICAR and glutamate. The HisH subunit catalyzes the hydrolysis of glutamine to glutamate and ammonia as part of the synthesis of IGP and AICAR. The resulting ammonia molecule is channeled to the active site of HisF. This chain is Imidazole glycerol phosphate synthase subunit HisH, found in Streptococcus gordonii (strain Challis / ATCC 35105 / BCRC 15272 / CH1 / DL1 / V288).